Reading from the N-terminus, the 513-residue chain is Meiotically up-regulated gene 133 protein (513 aa).

Belongs to the UPF0300 family.

It is found in the golgi apparatus. Its subcellular location is the vacuole membrane. Functionally, has a role in meiosis. The polypeptide is Meiotically up-regulated gene 133 protein (mug133) (Schizosaccharomyces pombe (strain 972 / ATCC 24843) (Fission yeast)).